A 274-amino-acid chain; its full sequence is 2,3,4,5-tetrahydropyridine-2,6-dicarboxylate N-succinyltransferase (274 aa).

Positions 104 and 141 each coordinate substrate.

This sequence belongs to the transferase hexapeptide repeat family. As to quaternary structure, homotrimer.

The protein resides in the cytoplasm. The enzyme catalyses (S)-2,3,4,5-tetrahydrodipicolinate + succinyl-CoA + H2O = (S)-2-succinylamino-6-oxoheptanedioate + CoA. It functions in the pathway amino-acid biosynthesis; L-lysine biosynthesis via DAP pathway; LL-2,6-diaminopimelate from (S)-tetrahydrodipicolinate (succinylase route): step 1/3. The sequence is that of 2,3,4,5-tetrahydropyridine-2,6-dicarboxylate N-succinyltransferase from Shewanella amazonensis (strain ATCC BAA-1098 / SB2B).